The following is a 239-amino-acid chain: tRNA (guanine-N(1)-)-methyltransferase (239 aa).

S-adenosyl-L-methionine-binding positions include G115 and 134–139 (MGDFVL). Residues 210-239 (QQQREQRTQERRPDLWNRWQQIQNPTPPAP) are disordered. The span at 211–224 (QQREQRTQERRPDL) shows a compositional bias: basic and acidic residues.

The protein belongs to the RNA methyltransferase TrmD family. As to quaternary structure, homodimer.

It is found in the cytoplasm. The catalysed reaction is guanosine(37) in tRNA + S-adenosyl-L-methionine = N(1)-methylguanosine(37) in tRNA + S-adenosyl-L-homocysteine + H(+). Specifically methylates guanosine-37 in various tRNAs. This Synechococcus sp. (strain CC9311) protein is tRNA (guanine-N(1)-)-methyltransferase.